We begin with the raw amino-acid sequence, 340 residues long: Annexin A2-B (340 aa).

The P10 binding site stretch occupies residues 2–25; that stretch reads ALIHEILGKLSLEGNQSSSRQSKL. A Phosphoserine; by PKC modification is found at Ser27. 4 Annexin repeats span residues 34 to 105, 106 to 177, 190 to 262, and 266 to 337; these read FDAE…GLIK, TRPQ…ALAK, EKID…NLVQ, and NKPL…NLCG.

The protein belongs to the annexin family. Tetramer of 2 light chains (p10 proteins) and 2 heavy chains (p36 proteins). As to expression, adult brain, heart, striated muscle, liver, kidney, and very high levels in skin.

The protein resides in the secreted. It is found in the extracellular space. Its subcellular location is the extracellular matrix. It localises to the basement membrane. Calcium-regulated membrane-binding protein whose affinity for calcium is greatly enhanced by anionic phospholipids. It binds two calcium ions with high affinity. The polypeptide is Annexin A2-B (anxa2-b) (Xenopus laevis (African clawed frog)).